A 489-amino-acid chain; its full sequence is Cytochrome P450 monooxygenase prhB (489 aa).

3 helical membrane-spanning segments follow: residues 1–21 (MFSFGFLITAVVFWVVTKVIY), 212–232 (VIFQCLGFFPWIKEPLVMIFA), and 287–307 (LFIGAGAESTATLLMGVAYLL). Residues N347 and N379 are each glycosylated (N-linked (GlcNAc...) asparagine). C431 provides a ligand contact to heme.

This sequence belongs to the cytochrome P450 family. The cofactor is heme.

The protein resides in the membrane. It participates in secondary metabolite biosynthesis; terpenoid biosynthesis. In terms of biological role, cytochrome P450 monooxygenase; part of the gene cluster that mediates the biosynthesis of paraherquonin, a meroterpenoid with a unique, highly congested hexacyclic molecular architecture. The first step of the pathway is the synthesis of 3,5-dimethylorsellinic acid (DMOA) by the polyketide synthase prhL. Synthesis of DMOA is followed by farnesylation by the prenyltransferase prhE, methylesterification by the methyl-transferase prhM, epoxidation of the prenyl chain by the flavin-dependent monooxygenase prhF, and cyclization of the farnesyl moiety by the terpene cyclase prhH, to yield the tetracyclic intermediate, protoaustinoid A. The short chain dehydrogenase prhI then oxidizes the C-3 alcohol group of the terpene cyclase product to transform protoaustinoid A into protoaustinoid B. The FAD-binding monooxygenase prhJ catalyzes the oxidation of protoaustinoid B into preaustinoid A which is further oxidized into preaustinoid A1 by FAD-binding monooxygenase phrK. Finally, prhA leads to berkeleydione via the berkeleyone B intermediate. PrhA is a multifunctional dioxygenase that first desaturates at C5-C6 to form berkeleyone B, followed by rearrangement of the A/B-ring to form the cycloheptadiene moiety in berkeleydione. Berkeleydione serves as the key intermediate for the biosynthesis of paraherquonin as well as many other meroterpenoids. The cytochrome P450 monooxygenases prhB, prhD, and prhN, as well as the isomerase prhC, are probably involved in the late stage of paraherquonin biosynthesis, after the production of berkeleydione. Especially prhC might be a multifunctional enzyme that catalyzes the D-ring expansion via intramolecular methoxy rearrangement, as well as the hydrolysis of the expanded D-ring. This is Cytochrome P450 monooxygenase prhB from Penicillium brasilianum.